The primary structure comprises 419 residues: Gamma-glutamyl phosphate reductase (419 aa).

Belongs to the gamma-glutamyl phosphate reductase family.

It is found in the cytoplasm. The enzyme catalyses L-glutamate 5-semialdehyde + phosphate + NADP(+) = L-glutamyl 5-phosphate + NADPH + H(+). Its pathway is amino-acid biosynthesis; L-proline biosynthesis; L-glutamate 5-semialdehyde from L-glutamate: step 2/2. Its function is as follows. Catalyzes the NADPH-dependent reduction of L-glutamate 5-phosphate into L-glutamate 5-semialdehyde and phosphate. The product spontaneously undergoes cyclization to form 1-pyrroline-5-carboxylate. This is Gamma-glutamyl phosphate reductase from Azoarcus sp. (strain BH72).